The sequence spans 180 residues: Translation machinery-associated protein 16 homolog (180 aa).

Over residues 1–12 (MTNLRKELEKCK) the composition is skewed to basic and acidic residues. Residues 1-32 (MTNLRKELEKCKHPNSRKTKALGKKARRQNNK) form a disordered region. Residues 13–32 (HPNSRKTKALGKKARRQNNK) are compositionally biased toward basic residues.

It belongs to the TMA16 family.

This Drosophila melanogaster (Fruit fly) protein is Translation machinery-associated protein 16 homolog.